A 780-amino-acid polypeptide reads, in one-letter code: Translation initiation factor IF-2 (780 aa).

Residues 24 to 194 (AEEKGFPVKN…KGAPERKNKA (171 aa)) are disordered. Composition is skewed to polar residues over residues 59–71 (EQSA…QRKV) and 80–90 (QGTARTQTTAQ). 2 stretches are compositionally biased toward low complexity: residues 98–114 (NQTQ…QTGN) and 132–158 (NNNT…SRNN). The segment covering 159 to 176 (RNNRRRNNNNNNRYKKNQ) has biased composition (basic residues). Over residues 177–194 (RIKDTNQHKGAPERKNKA) the composition is skewed to basic and acidic residues. One can recognise a tr-type G domain in the interval 281 to 450 (PRAPVVTIMG…LLQSDVLELK (170 aa)). The tract at residues 290–297 (GHVDHGKT) is G1. 290–297 (GHVDHGKT) is a GTP binding site. The tract at residues 315–319 (GITQA) is G2. The G3 stretch occupies residues 336 to 339 (DTPG). Residues 336 to 340 (DTPGH) and 390 to 393 (NKID) each bind GTP. A G4 region spans residues 390-393 (NKID). Residues 426-428 (SAK) are G5.

This sequence belongs to the TRAFAC class translation factor GTPase superfamily. Classic translation factor GTPase family. IF-2 subfamily.

The protein localises to the cytoplasm. In terms of biological role, one of the essential components for the initiation of protein synthesis. Protects formylmethionyl-tRNA from spontaneous hydrolysis and promotes its binding to the 30S ribosomal subunits. Also involved in the hydrolysis of GTP during the formation of the 70S ribosomal complex. The protein is Translation initiation factor IF-2 of Levilactobacillus brevis (strain ATCC 367 / BCRC 12310 / CIP 105137 / JCM 1170 / LMG 11437 / NCIMB 947 / NCTC 947) (Lactobacillus brevis).